The sequence spans 441 residues: MSSYNSPHAYYPHDNTIINISGSDNTTNINTTTINSTSVDQDIHYYEDGTHYDRRNTHANCNNYNVGNGIGRNIIDNNRHESIRDCNESIRNVLQGRLNRSDNSCRLDVNSQILVGVGAPANSCGTNGDIYIDKCTRDYYTNRNRIWVFVGNLECREQIYGTGGCKGEKGIKGELGPKGNTGQKGDIGSKGDRGDKGEPTISMFSYINSYEQSVPGGFTSVVPSKATIAYISCVGGGGGGSSGSGNSGFHGGGAGGSVIKYPVSVVENQVIRGTVGAGGSGGQVGTLGMCGTDTVVTIGTLTITAKAGLSPTETSGGDGGTVIFAQGMFSPAIAKGGTLSSPSGSNGNVGFFAFSGAGGGFRGGNGGNILAFNGGKSQGPDTAGGGGASAFADGGSITIRGCVTASKGSGGGGAIQTGPVSISGVAGNGGNGYVRIDYYSQ.

In terms of domain architecture, Collagen-like spans 164-199 (GCKGEKGIKGELGPKGNTGQKGDIGSKGDRGDKGEP). A disordered region spans residues 171 to 198 (IKGELGPKGNTGQKGDIGSKGDRGDKGE). Basic and acidic residues predominate over residues 187–198 (IGSKGDRGDKGE).

The chain is Putative collagenous domain-containing protein R238 from Acanthamoeba polyphaga (Amoeba).